The following is a 141-amino-acid chain: Hemoglobin subunit alpha-A (141 aa).

A Globin domain is found at 1-141 (VLNAGDKANV…VGTVLTSKYR (141 aa)). His-58 is an O2 binding site. His-87 serves as a coordination point for heme b.

The protein belongs to the globin family. As to quaternary structure, heterotetramer of two alpha chains and two beta chains. Red blood cells.

Functionally, involved in oxygen transport from the lung to the various peripheral tissues. The polypeptide is Hemoglobin subunit alpha-A (HBAA) (Chrysemys picta bellii (Western painted turtle)).